The sequence spans 817 residues: Protein EFR3 homolog B (817 aa).

Phosphoserine occurs at positions 212, 214, and 216.

The protein belongs to the EFR3 family. As to quaternary structure, component of a phosphatidylinositol 4-kinase (PI4K) complex, composed of PI4KA, EFR3 (EFR3A or EFR3B), TTC7 (TTC7A or TTC7B) and HYCC (HYCC1 or HYCC2). Palmitoylated at its N-terminus, anchoring the protein to the plasma membrane.

It localises to the cell membrane. Its subcellular location is the cytoplasm. It is found in the cytosol. Functionally, component of a complex required to localize phosphatidylinositol 4-kinase (PI4K) to the plasma membrane. The complex acts as a regulator of phosphatidylinositol 4-phosphate (PtdIns(4)P) synthesis. In the complex, EFR3B probably acts as the membrane-anchoring component. Also involved in responsiveness to G-protein-coupled receptors; it is however unclear whether this role is direct or indirect. This is Protein EFR3 homolog B from Homo sapiens (Human).